Consider the following 247-residue polypeptide: MTHTLILLRHGESEWNAKNLFTGWVDVNLTEKGRAEAVRGGELMREAGVLPDVVHTSVQRRAINTACLALDAADRHWIPVRRSWRLNERHYGALQGKNKKETLEAYGEEQFMLWRRSFDVPPPPIEEDSEFSQFGLPQYAGLGDDMPHTECLKDVIARFLPYWESDIVPDLRAGHTVLIAAHGNSLRALVKHLDGISDEDIAGLNIPTGMPLVYELDDDFRPTVPHGRYLDPEAAAAAAAAVANQGR.

Substrate-binding positions include 9–16, 22–23, Arg61, 88–91, Lys99, 115–116, and 183–184; these read RHGESEWN, TG, ERHY, RR, and GN. The Tele-phosphohistidine intermediate role is filled by His10. The active-site Proton donor/acceptor is the Glu88.

It belongs to the phosphoglycerate mutase family. BPG-dependent PGAM subfamily.

It catalyses the reaction (2R)-2-phosphoglycerate = (2R)-3-phosphoglycerate. The protein operates within carbohydrate degradation; glycolysis; pyruvate from D-glyceraldehyde 3-phosphate: step 3/5. Functionally, catalyzes the interconversion of 2-phosphoglycerate and 3-phosphoglycerate. The chain is 2,3-bisphosphoglycerate-dependent phosphoglycerate mutase from Nocardioides sp. (strain ATCC BAA-499 / JS614).